Consider the following 955-residue polypeptide: UvrABC system protein A (955 aa).

35–42 (GLSGSGKS) contributes to the ATP binding site. 2 ABC transporter domains span residues 322 to 601 (WGST…EESI) and 621 to 951 (GHDN…RYLK). ATP is bound at residue 654-661 (GVSGSGKS). Residues 754-780 (CEACQGDGLIKIEMHFLPDVYVKCDIC) form a C4-type zinc finger.

Belongs to the ABC transporter superfamily. UvrA family. Forms a heterotetramer with UvrB during the search for lesions.

It is found in the cytoplasm. Functionally, the UvrABC repair system catalyzes the recognition and processing of DNA lesions. UvrA is an ATPase and a DNA-binding protein. A damage recognition complex composed of 2 UvrA and 2 UvrB subunits scans DNA for abnormalities. When the presence of a lesion has been verified by UvrB, the UvrA molecules dissociate. This chain is UvrABC system protein A, found in Rickettsia conorii (strain ATCC VR-613 / Malish 7).